Reading from the N-terminus, the 187-residue chain is Elongation factor P (187 aa).

The protein belongs to the elongation factor P family.

Its subcellular location is the cytoplasm. It participates in protein biosynthesis; polypeptide chain elongation. Functionally, involved in peptide bond synthesis. Stimulates efficient translation and peptide-bond synthesis on native or reconstituted 70S ribosomes in vitro. Probably functions indirectly by altering the affinity of the ribosome for aminoacyl-tRNA, thus increasing their reactivity as acceptors for peptidyl transferase. This Rhodospirillum rubrum (strain ATCC 11170 / ATH 1.1.1 / DSM 467 / LMG 4362 / NCIMB 8255 / S1) protein is Elongation factor P.